A 1220-amino-acid polypeptide reads, in one-letter code: Plasma membrane calcium-transporting ATPase 3 (1220 aa).

A compositionally biased stretch (polar residues) spans 1–20 (MGDMANSSIEFHPKPQQQRD). Residues 1–23 (MGDMANSSIEFHPKPQQQRDVPQ) form a disordered region. Residues 1–97 (MGDMANSSIE…NFIPPKQPKT (97 aa)) lie on the Cytoplasmic side of the membrane. Phosphoserine is present on S8. A helical transmembrane segment spans residues 98 to 118 (FLQLVWEALQDVTLIILEVAA). The Extracellular portion of the chain corresponds to 119 to 155 (IVSLGLSFYAPPGEESEACGNVSGGAEDEGEAEAGWI). The chain crosses the membrane as a helical span at residues 156–176 (EGAAILLSVICVVLVTAFNDW). Residues 177–364 (SKEKQFRGLQ…KEKSVLQGKL (188 aa)) lie on the Cytoplasmic side of the membrane. A disordered region spans residues 298–355 (EEEKKDKKGKQQDGAMESSQTKAKKQDGAVAMEMQPLKSAEGGEMEEREKKKANAPKK). Composition is skewed to basic and acidic residues over residues 299 to 308 (EEKKDKKGKQ) and 342 to 355 (MEEREKKKANAPKK). A helical transmembrane segment spans residues 365–384 (TKLAVQIGKAGLVMSAITVI). The Extracellular segment spans residues 385-417 (ILVLYFVIETFVVEGRTWLAECTPVYVQYFVKF). A helical transmembrane segment spans residues 418-435 (FIIGVTVLVVAVPEGLPL). Over 436 to 849 (AVTISLAYSV…MWGRNVYDSI (414 aa)) the chain is Cytoplasmic. The active-site 4-aspartylphosphate intermediate is D473. Positions 794 and 798 each coordinate Mg(2+). A helical transmembrane segment spans residues 850-869 (SKFLQFQLTVNVVAVIVAFT). The Extracellular segment spans residues 870 to 879 (GACITQDSPL). Residues 880–900 (KAVQMLWVNLIMDTFASLALA) traverse the membrane as a helical segment. The Cytoplasmic segment spans residues 901–920 (TEPPTESLLLRKPYGRDKPL). The chain crosses the membrane as a helical span at residues 921-943 (ISRTMMKNILGHAVYQLAIIFTL). Residues 944 to 961 (LFVGELFFDIDSGRNAPL) are Extracellular-facing. Residues 962-983 (HSPPSEHYTIIFNTFVMMQLFN) form a helical membrane-spanning segment. Residues 984-1002 (EINARKIHGERNVFDGIFS) are Cytoplasmic-facing. The chain crosses the membrane as a helical span at residues 1003–1024 (NPIFCTIVLGTFGIQIVIVQFG). At 1025-1034 (GKPFSCSPLS) the chain is on the extracellular side. Residues 1035-1056 (TEQWLWCLFVGVGELVWGQVIA) form a helical membrane-spanning segment. Topologically, residues 1057 to 1220 (TIPTSQLKCL…SPLHSVETSL (164 aa)) are cytoplasmic. T1079 is modified (phosphothreonine). A calmodulin-binding subdomain A region spans residues 1097–1114 (LRRGQILWFRGLNRIQTQ). Position 1113 is a phosphothreonine; by PKC (T1113). Positions 1115 to 1124 (IRVVKAFRSS) are calmodulin-binding subdomain B. The interval 1166 to 1186 (ENEERLRAPPPPSPNQNNNAI) is disordered.

This sequence belongs to the cation transport ATPase (P-type) (TC 3.A.3) family. Type IIB subfamily. As to quaternary structure, interacts with PDZD11. Interacts (via N-terminus) with YWHAE. As to expression, highly expressed in the cerebellum. Expressed in adrenal glands.

It localises to the cell membrane. It is found in the presynaptic cell membrane. It carries out the reaction Ca(2+)(in) + ATP + H2O = Ca(2+)(out) + ADP + phosphate + H(+). Down-regulated by YWHAE. ATP-driven Ca(2+) ion pump involved in the maintenance of basal intracellular Ca(2+) levels at the presynaptic terminals. Uses ATP as an energy source to transport cytosolic Ca(2+) ions across the plasma membrane to the extracellular compartment. May counter-transport protons, but the mechanism and the stoichiometry of this Ca(2+)/H(+) exchange remains to be established. In Homo sapiens (Human), this protein is Plasma membrane calcium-transporting ATPase 3.